The sequence spans 261 residues: Mite allergen Eur m 3 (261 aa).

Residues 1 to 18 form the signal peptide; the sequence is MVICNAIIVLLLAFNTLA. A propeptide spanning residues 19–29 is cleaved from the precursor; it reads NPILPSSPNAT. The Peptidase S1 domain occupies 30–260; that stretch reads IVGGQKAKAG…FIDWIDSKRS (231 aa). Cys54 and Cys70 are oxidised to a cystine. Residues His69 and Asp114 each act as charge relay system in the active site. 2 cysteine pairs are disulfide-bonded: Cys181/Cys198 and Cys210/Cys236. The active-site Charge relay system is the Ser214.

This sequence belongs to the peptidase S1 family.

The protein localises to the secreted. This Euroglyphus maynei (Mayne's house dust mite) protein is Mite allergen Eur m 3 (EURM3).